The primary structure comprises 103 residues: uncharacterized protein (103 aa).

Its subcellular location is the mitochondrion. This is an uncharacterized protein from Claviceps purpurea (Ergot fungus).